The chain runs to 397 residues: Acetate kinase (397 aa).

Mg(2+) is bound at residue Asn7. Lys14 is a binding site for ATP. Arg90 contacts substrate. Asp147 acts as the Proton donor/acceptor in catalysis. ATP-binding positions include 207-211 (HLGNG), 282-284 (DFR), and 330-334 (GLGEN). Residue Glu383 coordinates Mg(2+).

This sequence belongs to the acetokinase family. Homodimer. Requires Mg(2+) as cofactor. It depends on Mn(2+) as a cofactor.

It is found in the cytoplasm. It carries out the reaction acetate + ATP = acetyl phosphate + ADP. Its pathway is metabolic intermediate biosynthesis; acetyl-CoA biosynthesis; acetyl-CoA from acetate: step 1/2. In terms of biological role, catalyzes the formation of acetyl phosphate from acetate and ATP. Can also catalyze the reverse reaction. The chain is Acetate kinase from Clostridium botulinum (strain Langeland / NCTC 10281 / Type F).